A 614-amino-acid polypeptide reads, in one-letter code: DNA double-strand break repair protein Mre11 (614 aa).

D12, H14, D53, and N88 together coordinate Mn(2+). The active-site Proton donor is H89. Mn(2+) contacts are provided by H158, D189, and H191. 2 disordered regions span residues 393–434 (ASPI…SPDI) and 487–614 (ALKK…GDYL). Positions 411–425 (PVSSADSVSAVSPES) are enriched in low complexity. Basic and acidic residues-rich tracts occupy residues 487–502 (ALKK…REAP), 535–558 (VPEK…KETG), and 568–591 (GSEK…EKPV).

This sequence belongs to the MRE11/RAD32 family. As to quaternary structure, homodimer. Forms a heterotetramer composed of two Mre11 subunits and two Rad50 subunits. Mn(2+) serves as cofactor.

With respect to regulation, nuclease activity is regulated by Rad50. Part of the Rad50/Mre11 complex, which is involved in the early steps of DNA double-strand break (DSB) repair. The complex may facilitate opening of the processed DNA ends to aid in the recruitment of HerA and NurA. Mre11 binds to DSB ends and has both double-stranded 3'-5' exonuclease activity and single-stranded endonuclease activity. This Methanosarcina acetivorans (strain ATCC 35395 / DSM 2834 / JCM 12185 / C2A) protein is DNA double-strand break repair protein Mre11.